The chain runs to 184 residues: Large ribosomal subunit protein uL6 (184 aa).

This sequence belongs to the universal ribosomal protein uL6 family. Part of the 50S ribosomal subunit.

In terms of biological role, this protein binds to the 23S rRNA, and is important in its secondary structure. It is located near the subunit interface in the base of the L7/L12 stalk, and near the tRNA binding site of the peptidyltransferase center. This Pseudothermotoga lettingae (strain ATCC BAA-301 / DSM 14385 / NBRC 107922 / TMO) (Thermotoga lettingae) protein is Large ribosomal subunit protein uL6.